Here is a 957-residue protein sequence, read N- to C-terminus: Glycine dehydrogenase (decarboxylating) (957 aa).

N6-(pyridoxal phosphate)lysine is present on lysine 702.

It belongs to the GcvP family. In terms of assembly, the glycine cleavage system is composed of four proteins: P, T, L and H. Requires pyridoxal 5'-phosphate as cofactor.

The catalysed reaction is N(6)-[(R)-lipoyl]-L-lysyl-[glycine-cleavage complex H protein] + glycine + H(+) = N(6)-[(R)-S(8)-aminomethyldihydrolipoyl]-L-lysyl-[glycine-cleavage complex H protein] + CO2. The glycine cleavage system catalyzes the degradation of glycine. The P protein binds the alpha-amino group of glycine through its pyridoxal phosphate cofactor; CO(2) is released and the remaining methylamine moiety is then transferred to the lipoamide cofactor of the H protein. The sequence is that of Glycine dehydrogenase (decarboxylating) from Bradyrhizobium sp. (strain ORS 278).